A 197-amino-acid polypeptide reads, in one-letter code: Phosphoheptose isomerase (197 aa).

The region spanning 37 to 197 is the SIS domain; that stretch reads MLQCLMNDGK…CIDSVLLEGM (161 aa). A substrate-binding site is contributed by 52-54; that stretch reads NGG. His-61 and Glu-65 together coordinate Zn(2+). Residues Glu-65, 94–95, 120–122, Ser-125, and Gln-175 contribute to the substrate site; these read ND and STS. Zn(2+) contacts are provided by Gln-175 and His-183.

This sequence belongs to the SIS family. GmhA subfamily. Homotetramer. Zn(2+) is required as a cofactor.

It is found in the cytoplasm. It catalyses the reaction 2 D-sedoheptulose 7-phosphate = D-glycero-alpha-D-manno-heptose 7-phosphate + D-glycero-beta-D-manno-heptose 7-phosphate. Its pathway is carbohydrate biosynthesis; D-glycero-D-manno-heptose 7-phosphate biosynthesis; D-glycero-alpha-D-manno-heptose 7-phosphate and D-glycero-beta-D-manno-heptose 7-phosphate from sedoheptulose 7-phosphate: step 1/1. Its function is as follows. Catalyzes the isomerization of sedoheptulose 7-phosphate in D-glycero-D-manno-heptose 7-phosphate. This chain is Phosphoheptose isomerase, found in Neisseria gonorrhoeae (strain ATCC 700825 / FA 1090).